We begin with the raw amino-acid sequence, 198 residues long: DnaJ homolog subfamily C member 12 (198 aa).

An N-acetylmethionine modification is found at Met1. Residues 14 to 79 enclose the J domain; it reads DYYTLLGCDE…ESRARYDHWR (66 aa). The disordered stretch occupies residues 121–183; that stretch reads TNTAQNKERS…CGHLHFRWSG (63 aa). The segment covering 126–156 has biased composition (basic and acidic residues); the sequence is NKERSEQRETKQGDPDSTPEKMMQKESESPE. Residues Ser160, Ser166, and Ser182 each carry the phosphoserine modification.

In terms of assembly, interacts with HSPA8. Interacts with TPH1. Interacts with TPH2.

It localises to the cytoplasm. Functionally, probable co-chaperone that participates in the proper folding of biopterin-dependent aromatic amino acid hydroxylases, which include phenylalanine-4-hydroxylase (PAH), tyrosine 3-monooxygenase (TH) and peripheral and neuronal tryptophan hydroxylases (TPH1 and TPH2). The sequence is that of DnaJ homolog subfamily C member 12 (Dnajc12) from Rattus norvegicus (Rat).